Here is a 480-residue protein sequence, read N- to C-terminus: Bindin (480 aa).

A signal peptide spans 1–20 (MDSQVLPLILLIIVFAASSA). Residues 21–247 (HGHFPHRTNQ…GEMRAERQRR (227 aa)) constitute a propeptide that is removed on maturation. The interval 161-211 (AEMRHRRSAKDDDVNKRASPRKGSSPAGKKVQIMEQDAGKGDAHNEKEVVK) is disordered. Over residues 197 to 211 (DAGKGDAHNEKEVVK) the composition is skewed to basic and acidic residues. Positions 377–385 (LRHLRHHSN) are fucose-binding domain. A helical transmembrane segment spans residues 431-451 (GAGAVAGAAMAAGMPPYPGGA). The interval 452–480 (QGGMRVGGQPQNPMGGNAYNPMTGYRQQG) is disordered.

This sequence belongs to the bindin family.

It localises to the cytoplasmic vesicle. The protein localises to the secretory vesicle. Its subcellular location is the acrosome membrane. Functionally, species-specific sea urchin sperm protein required for adhesion of sperm to the egg surface during fertilization. Bindin coats the acrosomal process after it is externalized by the acrosome reaction. It binds to sulfated, fucose-containing polysaccharides on the vitelline layer receptor proteoglycans which cover the egg plasma membrane. This is Bindin from Arbacia punctulata (Punctuate sea urchin).